A 100-amino-acid polypeptide reads, in one-letter code: UPF0213 protein YhbQ (100 aa).

Residues threonine 2 to arginine 77 form the GIY-YIG domain.

This sequence belongs to the UPF0213 family.

In Escherichia coli O81 (strain ED1a), this protein is UPF0213 protein YhbQ.